Reading from the N-terminus, the 101-residue chain is MAKKSKVARNEQRKQIVARYAARRAELKELIRKPSTPEADRAAAQAALQRLPRDASPVRLRNRDAADGRPRGHLRKFGLSRVRVREMAHRGELPGVHKSSW.

The interval 31–74 (IRKPSTPEADRAAAQAALQRLPRDASPVRLRNRDAADGRPRGHL) is disordered. A compositionally biased stretch (basic and acidic residues) spans 61-70 (RNRDAADGRP).

This sequence belongs to the universal ribosomal protein uS14 family. In terms of assembly, part of the 30S ribosomal subunit. Contacts proteins S3 and S10.

Binds 16S rRNA, required for the assembly of 30S particles and may also be responsible for determining the conformation of the 16S rRNA at the A site. This chain is Small ribosomal subunit protein uS14A, found in Nocardia farcinica (strain IFM 10152).